Consider the following 205-residue polypeptide: Protein GrpE (205 aa).

Residues 1–18 (MSEEVKNSVETEENKASK) show a composition bias toward basic and acidic residues. Residues 1–60 (MSEEVKNSVETEENKASKDNATQAPNPTENHNTAQETEKAENSEKTESATQENESLDKLK) are disordered. Polar residues predominate over residues 19–35 (DNATQAPNPTENHNTAQ). Residues 36–47 (ETEKAENSEKTE) show a composition bias toward basic and acidic residues.

Belongs to the GrpE family. As to quaternary structure, homodimer.

It localises to the cytoplasm. Participates actively in the response to hyperosmotic and heat shock by preventing the aggregation of stress-denatured proteins, in association with DnaK and GrpE. It is the nucleotide exchange factor for DnaK and may function as a thermosensor. Unfolded proteins bind initially to DnaJ; upon interaction with the DnaJ-bound protein, DnaK hydrolyzes its bound ATP, resulting in the formation of a stable complex. GrpE releases ADP from DnaK; ATP binding to DnaK triggers the release of the substrate protein, thus completing the reaction cycle. Several rounds of ATP-dependent interactions between DnaJ, DnaK and GrpE are required for fully efficient folding. In Chloroherpeton thalassium (strain ATCC 35110 / GB-78), this protein is Protein GrpE.